Reading from the N-terminus, the 169-residue chain is Nucleoside-triphosphatase THEP1 (169 aa).

ATP-binding positions include glycine 11–threonine 18 and isoleucine 100–glycine 107.

It belongs to the THEP1 NTPase family.

The catalysed reaction is a ribonucleoside 5'-triphosphate + H2O = a ribonucleoside 5'-diphosphate + phosphate + H(+). In terms of biological role, has nucleotide phosphatase activity towards ATP, GTP, CTP, TTP and UTP. May hydrolyze nucleoside diphosphates with lower efficiency. This is Nucleoside-triphosphatase THEP1 from Sulfurisphaera tokodaii (strain DSM 16993 / JCM 10545 / NBRC 100140 / 7) (Sulfolobus tokodaii).